Reading from the N-terminus, the 198-residue chain is Probable GTP-binding protein EngB (198 aa).

Residues 22–195 (NRNEVAFVGR…IDKLFLEFAT (174 aa)) enclose the EngB-type G domain. GTP-binding positions include 30–37 (GRSNVGKS), 57–61 (GKTRL), 75–78 (DLPG), 142–145 (TKSD), and 174–176 (YSS). Residues Ser-37 and Thr-59 each coordinate Mg(2+).

This sequence belongs to the TRAFAC class TrmE-Era-EngA-EngB-Septin-like GTPase superfamily. EngB GTPase family. The cofactor is Mg(2+).

Functionally, necessary for normal cell division and for the maintenance of normal septation. The protein is Probable GTP-binding protein EngB of Clostridium botulinum (strain Alaska E43 / Type E3).